A 428-amino-acid chain; its full sequence is Glutamate-1-semialdehyde 2,1-aminomutase (428 aa).

Lys-265 bears the N6-(pyridoxal phosphate)lysine mark.

The protein belongs to the class-III pyridoxal-phosphate-dependent aminotransferase family. HemL subfamily. In terms of assembly, homodimer. It depends on pyridoxal 5'-phosphate as a cofactor.

It localises to the cytoplasm. The enzyme catalyses (S)-4-amino-5-oxopentanoate = 5-aminolevulinate. It participates in porphyrin-containing compound metabolism; protoporphyrin-IX biosynthesis; 5-aminolevulinate from L-glutamyl-tRNA(Glu): step 2/2. The chain is Glutamate-1-semialdehyde 2,1-aminomutase from Aeromonas hydrophila subsp. hydrophila (strain ATCC 7966 / DSM 30187 / BCRC 13018 / CCUG 14551 / JCM 1027 / KCTC 2358 / NCIMB 9240 / NCTC 8049).